We begin with the raw amino-acid sequence, 243 residues long: DNA repair protein RecO (243 aa).

This sequence belongs to the RecO family.

Functionally, involved in DNA repair and RecF pathway recombination. The polypeptide is DNA repair protein RecO (Xylella fastidiosa (strain M23)).